The following is a 340-amino-acid chain: UDP-3-O-acylglucosamine N-acyltransferase (340 aa).

Histidine 238 serves as the catalytic Proton acceptor.

The protein belongs to the transferase hexapeptide repeat family. LpxD subfamily. In terms of assembly, homotrimer.

It carries out the reaction a UDP-3-O-[(3R)-3-hydroxyacyl]-alpha-D-glucosamine + a (3R)-hydroxyacyl-[ACP] = a UDP-2-N,3-O-bis[(3R)-3-hydroxyacyl]-alpha-D-glucosamine + holo-[ACP] + H(+). Its pathway is bacterial outer membrane biogenesis; LPS lipid A biosynthesis. Catalyzes the N-acylation of UDP-3-O-acylglucosamine using 3-hydroxyacyl-ACP as the acyl donor. Is involved in the biosynthesis of lipid A, a phosphorylated glycolipid that anchors the lipopolysaccharide to the outer membrane of the cell. This chain is UDP-3-O-acylglucosamine N-acyltransferase, found in Shewanella denitrificans (strain OS217 / ATCC BAA-1090 / DSM 15013).